The primary structure comprises 391 residues: Putative 1-acyl-sn-glycerol-3-phosphate acyltransferase acl-12 (391 aa).

2 helical membrane-spanning segments follow: residues 47–67 and 84–104; these read FFFM…SLLF and LCAM…ATVT. Residues 124-129 carry the HXXXXD motif motif; it reads HLGLLD.

This sequence belongs to the 1-acyl-sn-glycerol-3-phosphate acyltransferase family.

It localises to the membrane. The catalysed reaction is a 1-acyl-sn-glycero-3-phosphate + an acyl-CoA = a 1,2-diacyl-sn-glycero-3-phosphate + CoA. It participates in phospholipid metabolism; CDP-diacylglycerol biosynthesis; CDP-diacylglycerol from sn-glycerol 3-phosphate: step 2/3. Functionally, converts lysophosphatidic acid (LPA) into phosphatidic acid by incorporating an acyl moiety at the sn-2 position of the glycerol backbone. The chain is Putative 1-acyl-sn-glycerol-3-phosphate acyltransferase acl-12 (acl-12) from Caenorhabditis elegans.